The following is a 366-amino-acid chain: NADP-dependent isopropanol dehydrogenase (366 aa).

4 residues coordinate Zn(2+): Cys-43, His-65, Glu-66, and Asp-156. Residues 181-184 (IGPV), 204-206 (GSR), Tyr-224, 271-273 (VNY), and Lys-346 contribute to the NADP(+) site.

The protein belongs to the zinc-containing alcohol dehydrogenase family. As to quaternary structure, homodimer. It depends on Zn(2+) as a cofactor.

The protein resides in the cytoplasm. The enzyme catalyses propan-2-ol + NADP(+) = acetone + NADPH + H(+). Functionally, alcohol dehydrogenase with a preference for medium chain secondary alcohols, such as 2-butanol and isopropanol. Has very low activity with primary alcohols, such as ethanol. Under physiological conditions, the enzyme reduces aldehydes and 2-ketones to produce secondary alcohols. Is also active with acetaldehyde and propionaldehyde. The polypeptide is NADP-dependent isopropanol dehydrogenase (Entamoeba histolytica (strain ATCC 30459 / HM-1:IMSS / ABRM)).